Reading from the N-terminus, the 316-residue chain is ATP synthase gamma chain (316 aa).

It belongs to the ATPase gamma chain family. F-type ATPases have 2 components, CF(1) - the catalytic core - and CF(0) - the membrane proton channel. CF(1) has five subunits: alpha(3), beta(3), gamma(1), delta(1), epsilon(1). CF(0) has three main subunits: a, b and c.

The protein localises to the cellular thylakoid membrane. Functionally, produces ATP from ADP in the presence of a proton gradient across the membrane. The gamma chain is believed to be important in regulating ATPase activity and the flow of protons through the CF(0) complex. The polypeptide is ATP synthase gamma chain (Prochlorococcus marinus (strain MIT 9515)).